Reading from the N-terminus, the 662-residue chain is tRNA 5-methylaminomethyl-2-thiouridine biosynthesis bifunctional protein MnmC (662 aa).

The segment at 1-245 is tRNA (mnm(5)s(2)U34)-methyltransferase; the sequence is MKQNAIQPAN…KREMLTGEMA (245 aa). An FAD-dependent cmnm(5)s(2)U34 oxidoreductase region spans residues 270–662; that stretch reads IGGGIASALL…RKLLKGKAVK (393 aa).

It in the N-terminal section; belongs to the methyltransferase superfamily. tRNA (mnm(5)s(2)U34)-methyltransferase family. In the C-terminal section; belongs to the DAO family. The cofactor is FAD.

The protein localises to the cytoplasm. The catalysed reaction is 5-aminomethyl-2-thiouridine(34) in tRNA + S-adenosyl-L-methionine = 5-methylaminomethyl-2-thiouridine(34) in tRNA + S-adenosyl-L-homocysteine + H(+). Its function is as follows. Catalyzes the last two steps in the biosynthesis of 5-methylaminomethyl-2-thiouridine (mnm(5)s(2)U) at the wobble position (U34) in tRNA. Catalyzes the FAD-dependent demodification of cmnm(5)s(2)U34 to nm(5)s(2)U34, followed by the transfer of a methyl group from S-adenosyl-L-methionine to nm(5)s(2)U34, to form mnm(5)s(2)U34. The polypeptide is tRNA 5-methylaminomethyl-2-thiouridine biosynthesis bifunctional protein MnmC (Klebsiella pneumoniae subsp. pneumoniae (strain ATCC 700721 / MGH 78578)).